A 623-amino-acid polypeptide reads, in one-letter code: Glutathione import ATP-binding protein GsiA (623 aa).

ABC transporter domains lie at 15 to 269 (VENL…RALL) and 314 to 564 (LRVR…RKLL). Residues 49–56 (GESGSGKS) and 357–364 (GESGSGKS) contribute to the ATP site.

It belongs to the ABC transporter superfamily. Glutathione importer (TC 3.A.1.5.11) family. As to quaternary structure, the complex is composed of two ATP-binding proteins (GsiA), two transmembrane proteins (GsiC and GsiD) and a solute-binding protein (GsiB).

It is found in the cell inner membrane. The catalysed reaction is glutathione(out) + ATP + H2O = glutathione(in) + ADP + phosphate + H(+). Part of the ABC transporter complex GsiABCD involved in glutathione import. Responsible for energy coupling to the transport system. This is Glutathione import ATP-binding protein GsiA from Shigella flexneri serotype 5b (strain 8401).